Here is a 188-residue protein sequence, read N- to C-terminus: Inosine triphosphate pyrophosphatase (188 aa).

7–12 (TGNAGK) contacts ITP. Position 36 (Glu-36) interacts with Mg(2+). Residues Lys-48, 64 to 65 (DT), Lys-81, 140 to 143 (FGWN), Lys-163, and 168 to 169 (HR) each bind ITP.

This sequence belongs to the HAM1 NTPase family. Homodimer. Mg(2+) serves as cofactor. It depends on Mn(2+) as a cofactor.

It is found in the cytoplasm. The protein localises to the nucleus. It carries out the reaction ITP + H2O = IMP + diphosphate + H(+). It catalyses the reaction dITP + H2O = dIMP + diphosphate + H(+). The enzyme catalyses XTP + H2O = XMP + diphosphate + H(+). Pyrophosphatase that hydrolyzes non-canonical purine nucleotides such as inosine triphosphate (ITP), deoxyinosine triphosphate (dITP) or xanthosine 5'-triphosphate (XTP) to their respective monophosphate derivatives. The enzyme does not distinguish between the deoxy- and ribose forms. Probably excludes non-canonical purines from RNA and DNA precursor pools, thus preventing their incorporation into RNA and DNA and avoiding chromosomal lesions. The polypeptide is Inosine triphosphate pyrophosphatase (Yarrowia lipolytica (strain CLIB 122 / E 150) (Yeast)).